Consider the following 219-residue polypeptide: Phosphatidylserine decarboxylase proenzyme (219 aa).

The active-site Schiff-base intermediate with substrate; via pyruvic acid is serine 182. Serine 182 carries the pyruvic acid (Ser); by autocatalysis modification.

This sequence belongs to the phosphatidylserine decarboxylase family. PSD-A subfamily. Heterodimer of a large membrane-associated beta subunit and a small pyruvoyl-containing alpha subunit. It depends on pyruvate as a cofactor. Is synthesized initially as an inactive proenzyme. Formation of the active enzyme involves a self-maturation process in which the active site pyruvoyl group is generated from an internal serine residue via an autocatalytic post-translational modification. Two non-identical subunits are generated from the proenzyme in this reaction, and the pyruvate is formed at the N-terminus of the alpha chain, which is derived from the carboxyl end of the proenzyme. The post-translation cleavage follows an unusual pathway, termed non-hydrolytic serinolysis, in which the side chain hydroxyl group of the serine supplies its oxygen atom to form the C-terminus of the beta chain, while the remainder of the serine residue undergoes an oxidative deamination to produce ammonia and the pyruvoyl prosthetic group on the alpha chain.

The protein resides in the cell membrane. It carries out the reaction a 1,2-diacyl-sn-glycero-3-phospho-L-serine + H(+) = a 1,2-diacyl-sn-glycero-3-phosphoethanolamine + CO2. Its pathway is phospholipid metabolism; phosphatidylethanolamine biosynthesis; phosphatidylethanolamine from CDP-diacylglycerol: step 2/2. Catalyzes the formation of phosphatidylethanolamine (PtdEtn) from phosphatidylserine (PtdSer). This is Phosphatidylserine decarboxylase proenzyme from Chlorobium phaeovibrioides (strain DSM 265 / 1930) (Prosthecochloris vibrioformis (strain DSM 265)).